The following is a 295-amino-acid chain: uncharacterized protein (295 aa).

The span at 57-67 shows a compositional bias: basic residues; it reads RKLLVKQKRKS. The tract at residues 57–94 is disordered; the sequence is RKLLVKQKRKSNKEFQSNIIKKRKDEERKGTLKTEQAN. Over residues 79-88 the composition is skewed to basic and acidic residues; sequence RKDEERKGTL. Coiled coils occupy residues 87–116 and 259–286; these read TLKT…YDQY and DVLT…LGER.

Its subcellular location is the nucleus. This is an uncharacterized protein from Schizosaccharomyces pombe (strain 972 / ATCC 24843) (Fission yeast).